The primary structure comprises 395 residues: ATP synthase subunit beta, chloroplastic (395 aa).

72-79 provides a ligand contact to ATP; sequence GGAGVGKT.

This sequence belongs to the ATPase alpha/beta chains family. F-type ATPases have 2 components, CF(1) - the catalytic core - and CF(0) - the membrane proton channel. CF(1) has five subunits: alpha(3), beta(3), gamma(1), delta(1), epsilon(1). CF(0) has four main subunits: a(1), b(1), b'(1) and c(9-12).

It localises to the plastid. The protein resides in the chloroplast thylakoid membrane. It carries out the reaction ATP + H2O + 4 H(+)(in) = ADP + phosphate + 5 H(+)(out). In terms of biological role, produces ATP from ADP in the presence of a proton gradient across the membrane. The catalytic sites are hosted primarily by the beta subunits. The polypeptide is ATP synthase subunit beta, chloroplastic (Microlepia platyphylla (Plate fern)).